The sequence spans 309 residues: Cilia-and flagella-associated protein 96 (309 aa).

The interval 220–249 is disordered; the sequence is EEKKKTISNTFKPSSPGKKPGGMKAGTFDP.

It belongs to the CFAP96 family. In terms of tissue distribution, detected in testis and fetal liver.

The protein localises to the cytoplasm. Its subcellular location is the cytoskeleton. It localises to the microtubule organizing center. It is found in the centrosome. The protein is Cilia-and flagella-associated protein 96 of Homo sapiens (Human).